The following is a 48-amino-acid chain: ATP synthase protein 8 (48 aa).

A helical transmembrane segment spans residues 13–32 (VVFTLISLSFIFFVFSKYIL).

The protein belongs to the ATPase protein 8 family. In terms of assembly, F-type ATPases have 2 components, CF(1) - the catalytic core - and CF(0) - the membrane proton channel.

It localises to the mitochondrion membrane. Mitochondrial membrane ATP synthase (F(1)F(0) ATP synthase or Complex V) produces ATP from ADP in the presence of a proton gradient across the membrane which is generated by electron transport complexes of the respiratory chain. F-type ATPases consist of two structural domains, F(1) - containing the extramembraneous catalytic core and F(0) - containing the membrane proton channel, linked together by a central stalk and a peripheral stalk. During catalysis, ATP synthesis in the catalytic domain of F(1) is coupled via a rotary mechanism of the central stalk subunits to proton translocation. Part of the complex F(0) domain. Minor subunit located with subunit a in the membrane. This is ATP synthase protein 8 (ATP8) from Trichophyton rubrum (Athlete's foot fungus).